Here is a 382-residue protein sequence, read N- to C-terminus: Lipid-A-disaccharide synthase (382 aa).

The protein belongs to the LpxB family.

The catalysed reaction is a lipid X + a UDP-2-N,3-O-bis[(3R)-3-hydroxyacyl]-alpha-D-glucosamine = a lipid A disaccharide + UDP + H(+). Its pathway is bacterial outer membrane biogenesis; LPS lipid A biosynthesis. Functionally, condensation of UDP-2,3-diacylglucosamine and 2,3-diacylglucosamine-1-phosphate to form lipid A disaccharide, a precursor of lipid A, a phosphorylated glycolipid that anchors the lipopolysaccharide to the outer membrane of the cell. This chain is Lipid-A-disaccharide synthase, found in Koribacter versatilis (strain Ellin345).